A 173-amino-acid chain; its full sequence is Co-chaperone protein HscB (173 aa).

Residues 2-74 (DYFTLLGMPN…LSRAEYMLSL (73 aa)) enclose the J domain.

The protein belongs to the HscB family. As to quaternary structure, interacts with HscA and stimulates its ATPase activity. Interacts with IscU.

In terms of biological role, co-chaperone involved in the maturation of iron-sulfur cluster-containing proteins. Seems to help targeting proteins to be folded toward HscA. The polypeptide is Co-chaperone protein HscB (Proteus mirabilis (strain HI4320)).